A 443-amino-acid chain; its full sequence is Aklavinone 7-beta-L-rhodosaminyltransferase (443 aa).

An N-terminal signal peptide occupies residues 1 to 23; the sequence is MRVLLTSFALDAHFNGSVPLAWA.

The protein belongs to the glycosyltransferase 28 family.

It carries out the reaction dTDP-beta-L-rhodosamine + aklavinone = aclacinomycin T + dTDP + 2 H(+). The activity of AknS is substantially increased by the addition of the accessory protein AknT. Functionally, involved in the biosynthesis of the anthracycline antitumor agent aclacinomycin A. Catalyzes the transfer of the proximal deoxyhexose, L-rhodosamine, from dTDP-beta-L-rhodosamine to the C7-OH of aklavinone aglycone to yield aclacinomycin T (rhodosaminyl-aklavinone). It can also use dTDP-2-deoxy-beta-L-fucose, TDP-2-deoxyfucose, dTDP-4-amino-2-deoxyrhamnose, TDP-L-rhodosamine as sugar donor and epsilon-rhodomycinone as sugar acceptor. The sequence is that of Aklavinone 7-beta-L-rhodosaminyltransferase from Streptomyces galilaeus.